The primary structure comprises 368 residues: tRNA(Met) cytidine acetate ligase (368 aa).

Residues 7 to 20, glycine 96, asparagine 152, and arginine 175 contribute to the ATP site; that span reads IAEFNPFHNGHKYL.

Belongs to the TmcAL family.

The protein localises to the cytoplasm. The catalysed reaction is cytidine(34) in elongator tRNA(Met) + acetate + ATP = N(4)-acetylcytidine(34) in elongator tRNA(Met) + AMP + diphosphate. Its function is as follows. Catalyzes the formation of N(4)-acetylcytidine (ac(4)C) at the wobble position of elongator tRNA(Met), using acetate and ATP as substrates. First activates an acetate ion to form acetyladenylate (Ac-AMP) and then transfers the acetyl group to tRNA to form ac(4)C34. In Streptococcus pyogenes serotype M49 (strain NZ131), this protein is tRNA(Met) cytidine acetate ligase.